A 202-amino-acid chain; its full sequence is CASP-like protein 1U4 (202 aa).

Over 1 to 10 (MCLPAKWLHP) the chain is Cytoplasmic. A helical membrane pass occupies residues 11 to 31 (VSLIFRVAGIGLAAVSAAAML). At 32-56 (TASQCTVYADYGWRPRTVTYSDFPA) the chain is on the extracellular side. The chain crosses the membrane as a helical span at residues 57 to 77 (FVYLVAATAIATLLEAVALFL). The Cytoplasmic portion of the chain corresponds to 78-94 (SWSKKGKSKKSWRVLTM). A helical transmembrane segment spans residues 95–115 (LLLGAVVPALLYTSAGAAFAV). At 116–146 (GWEDIYYYLEPIGRRFSVCRSSVAGGRFCEH) the chain is on the extracellular side. Residues 147–167 (VHVSMWLALGAAVAVSFAEFL) form a helical membrane-spanning segment. Topologically, residues 168-202 (TTFRWCHGSGSCSDSDSDSDSDSESGCGHGCHCKH) are cytoplasmic.

It belongs to the Casparian strip membrane proteins (CASP) family. In terms of assembly, homodimer and heterodimers.

It is found in the cell membrane. The sequence is that of CASP-like protein 1U4 from Sorghum bicolor (Sorghum).